Reading from the N-terminus, the 522-residue chain is BAR/IMD domain-containing adapter protein 2-like 2 (522 aa).

The 239-residue stretch at 1-239 folds into the IMD domain; the sequence is MAPEMDQFYR…HSPGLLGPAL (239 aa). 2 disordered regions span residues 220–325 and 404–502; these read SEAS…GGGG and PMSP…GTNP. Residues Ser231, Ser272, and Ser303 each carry the phosphoserine modification. The segment covering 297–317 has biased composition (polar residues); the sequence is RTPSASSLYASSTQRSRSNSF. Residues 324 to 387 form the SH3 domain; the sequence is GGARRVRALV…PEAYVKPVEE (64 aa). The span at 443–456 shows a compositional bias: low complexity; that stretch reads SQSRSRTPSRVPSR. Residues 457-466 are compositionally biased toward pro residues; that stretch reads APSPAPPPLP. Residues Ser472 and Ser475 each carry the phosphoserine modification.

As to expression, expressed in the epithelial layer of the intestine and in the kidney.

The protein resides in the cell membrane. It localises to the cell junction. It is found in the cytoplasmic vesicle membrane. Phosphoinositides-binding protein that induces the formation of planar or gently curved membrane structures. Binds to phosphoinositides, including to phosphatidylinositol 4,5-bisphosphate (PtdIns(4,5)P2) headgroups. There seems to be no clear preference for a specific phosphoinositide. This Mus musculus (Mouse) protein is BAR/IMD domain-containing adapter protein 2-like 2 (Baiap2l2).